We begin with the raw amino-acid sequence, 4467 residues long: Protocadherin-like protein (4467 aa).

Residues 1–22 (MRGINAIVGFLLCFCLLHRINT) form the signal peptide. Cadherin domains lie at 23 to 128 (AVQF…SPTF), 129 to 238 (PQHL…SPVF), 239 to 350 (EKKS…VPVF), 351 to 455 (QEES…TPVF), 459 to 566 (NPQQ…NPDF), 567 to 664 (SKVV…PPTF), 665 to 764 (KNAP…PPTF), 765 to 884 (SRSS…SPEF), 885 to 994 (SQTS…PPLF), 1092 to 1197 (EAQP…QPRF), 1290 to 1395 (SRTV…SPKF), 1396 to 1499 (SADS…PPKF), 1495 to 1597 (GPPK…EPQF), 1601 to 1701 (SNGF…QPVR), 1793 to 1891 (TMID…KPQF), 1892 to 1992 (SESA…YPKF), 1993 to 2100 (EPNL…KPQF), 2101 to 2202 (LESD…RPVF), 2203 to 2312 (TDCP…FPFF), 2313 to 2423 (LTRT…PPAF), 2425 to 2529 (PSAV…TPTF), 2530 to 2639 (KLEE…PPIF), 2640 to 2746 (PKPS…IPKF), 2747 to 2849 (DNLI…SPYF), 2850 to 2954 (PNPP…APVF), 2955 to 3062 (NPRE…PPVF), 3063 to 3170 (VPAE…GPWF), and 3173 to 3288 (RYYE…EPFD). Residues 23 to 4258 (AVQFKQEILE…RPSSRWANPA (4236 aa)) lie on the Extracellular side of the membrane. The 39-residue stretch at 3551–3589 (PDINCTTGTPCLHGGTCHNAVPKGIICECGRDYLGPECQ) folds into the EGF-like 1 domain. 7 disulfides stabilise this stretch: Cys3555–Cys3567, Cys3561–Cys3577, Cys3579–Cys3588, Cys3762–Cys3788, Cys3794–Cys3803, Cys3797–Cys3812, and Cys3814–Cys3823. The Laminin G-like 1 domain maps to 3590–3788 (STTRTFRGNS…LKEVNTELGC (199 aa)). One can recognise an EGF-like 2 domain in the interval 3790–3824 (LNNQCPNCNGRGYCEPFWNYAICVCDLGFGGANCD). Residues 3842-4096 (VKQVKRKRRE…KVIISSSGGS (255 aa)) form the Laminin G-like 2 domain. The tract at residues 4089–4118 (IISSSGGSVSGGSGGASGGSGGASGSGGSV) is disordered. The segment covering 4096 to 4118 (SVSGGSGGASGGSGGASGSGGSV) has biased composition (gly residues). The EGF-like 3 domain maps to 4206-4238 (PCGSNFCRHGGTCVSADPPYCLCPVGWSGPVCE). Intrachain disulfides connect Cys4207–Cys4218, Cys4212–Cys4226, and Cys4228–Cys4237. Residues 4259-4279 (VIACILVILLAILVIIGAVLL) form a helical membrane-spanning segment. Residues 4280 to 4467 (KRRPQPAVVA…NLNRIFNEDE (188 aa)) are Cytoplasmic-facing. The interval 4424–4445 (DVDDLSELGDSDEEPDEEEEQE) is disordered.

As to expression, component of the acid-insoluble organic matrix of the aragonitic skeleton (at protein level).

The protein localises to the membrane. The polypeptide is Protocadherin-like protein (Acropora millepora (Staghorn coral)).